The sequence spans 856 residues: Valine--tRNA ligase (856 aa).

The 'HIGH' region motif lies at 47–57 (PTASGVLHIGH). Residues 578–582 (KMSKS) carry the 'KMSKS' region motif. Residue K581 coordinates ATP.

It belongs to the class-I aminoacyl-tRNA synthetase family. ValS type 2 subfamily. In terms of assembly, monomer.

It is found in the cytoplasm. The enzyme catalyses tRNA(Val) + L-valine + ATP = L-valyl-tRNA(Val) + AMP + diphosphate. Its function is as follows. Catalyzes the attachment of valine to tRNA(Val). As ValRS can inadvertently accommodate and process structurally similar amino acids such as threonine, to avoid such errors, it has a 'posttransfer' editing activity that hydrolyzes mischarged Thr-tRNA(Val) in a tRNA-dependent manner. The protein is Valine--tRNA ligase of Tropheryma whipplei (strain TW08/27) (Whipple's bacillus).